A 403-amino-acid polypeptide reads, in one-letter code: Synaptotagmin-7 (403 aa).

Over 1-16 (MYRDPEAASPGAPTRD) the chain is Vesicular. Residues 17-37 (VLLVSAIITVSLSVTIVLCGL) form a helical membrane-spanning segment. Over 38–403 (CHWCQRKLGK…PVAQWHQLKA (366 aa)) the chain is Cytoplasmic. The residue at position 52 (S52) is a Phosphoserine. Positions 53–103 (LETVGTPDSGRGRGEKKAIKLPAGGKAVNTAPVPGQTPHDESDRRTETRSS) are disordered. T58 carries the phosphothreonine modification. A Phosphoserine modification is found at S61. Over residues 90–100 (PHDESDRRTET) the composition is skewed to basic and acidic residues. A phosphoserine mark is found at S119 and S122. C2 domains follow at residues 135-255 (NLGR…TFWK) and 266-399 (SRGE…AQWH). D166 is a Ca(2+) binding site. Asymmetric dimethylarginine occurs at positions 169 and 171. Positions 172, 225, 227, 230, 233, 297, 303, 357, 359, 362, and 365 each coordinate Ca(2+).

It belongs to the synaptotagmin family. Homodimer. Can also form heterodimers with SYT6, SYT9 and SYT10. Interacts with calmodulin (CALM1, CALM2 or CALM3). Interacts with CD63; required for localization to lysosomes. Interacts with APP. It depends on Ca(2+) as a cofactor. In terms of processing, palmitoylated at its vesicular N-terminus; palmitoylation is required for localization to lysosome and phagocytosis in macrophages. In terms of tissue distribution, widely expressed. Expressed in insulin-secreting cells. Present in glucagon-secreting cells (at protein level).

It is found in the cell membrane. The protein resides in the presynaptic cell membrane. The protein localises to the cytoplasmic vesicle. It localises to the secretory vesicle. Its subcellular location is the synaptic vesicle membrane. It is found in the lysosome membrane. The protein resides in the phagosome membrane. The protein localises to the peroxisome membrane. It localises to the secretory vesicle membrane. Ca(2+) sensor involved in Ca(2+)-dependent exocytosis of secretory and synaptic vesicles through Ca(2+) and phospholipid binding to the C2 domain. Ca(2+) induces binding of the C2-domains to phospholipid membranes and to assembled SNARE-complexes; both actions contribute to triggering exocytosis. SYT7 binds Ca(2+) with high affinity and slow kinetics compared to other synaptotagmins. Involved in Ca(2+)-triggered lysosomal exocytosis, a major component of the plasma membrane repair. Ca(2+)-regulated delivery of lysosomal membranes to the cell surface is also involved in the phagocytic uptake of particles by macrophages. Ca(2+)-triggered lysosomal exocytosis also plays a role in bone remodeling by regulating secretory pathways in osteoclasts and osteoblasts. Involved in cholesterol transport from lysosome to peroxisome by promoting membrane contacts between lysosomes and peroxisomes: probably acts by promoting vesicle fusion by binding phosphatidylinositol-4,5-bisphosphate on peroxisomal membranes. Acts as a key mediator of synaptic facilitation, a process also named short-term synaptic potentiation: synaptic facilitation takes place at synapses with a low initial release probability and is caused by influx of Ca(2+) into the axon terminal after spike generation, increasing the release probability of neurotransmitters. Probably mediates synaptic facilitation by directly increasing the probability of release. May also contribute to synaptic facilitation by regulating synaptic vesicle replenishment, a process required to ensure that synaptic vesicles are ready for the arrival of the next action potential: SYT7 is required for synaptic vesicle replenishment by acting as a sensor for Ca(2+) and by forming a complex with calmodulin. Also acts as a regulator of Ca(2+)-dependent insulin and glucagon secretion in beta-cells. Triggers exocytosis by promoting fusion pore opening and fusion pore expansion in chromaffin cells. Also regulates the secretion of some non-synaptic secretory granules of specialized cells. The sequence is that of Synaptotagmin-7 from Mus musculus (Mouse).